Reading from the N-terminus, the 570-residue chain is Urease subunit alpha (570 aa).

Ni(2+) contacts are provided by His-137, His-139, and Lys-220. Lys-220 carries the post-translational modification N6-carboxylysine. His-222 serves as a coordination point for substrate. Ni(2+) is bound by residues His-249 and His-275. The Proton donor role is filled by His-323. Position 363 (Asp-363) interacts with Ni(2+).

The protein belongs to the metallo-dependent hydrolases superfamily. Urease alpha subunit family. In terms of assembly, heterotrimer of UreA (gamma), UreB (beta) and UreC (alpha) subunits. Three heterotrimers associate to form the active enzyme. The cofactor is Ni cation. In terms of processing, carboxylation allows a single lysine to coordinate two nickel ions.

It localises to the cytoplasm. It carries out the reaction urea + 2 H2O + H(+) = hydrogencarbonate + 2 NH4(+). Its pathway is nitrogen metabolism; urea degradation; CO(2) and NH(3) from urea (urease route): step 1/1. The polypeptide is Urease subunit alpha (Lachnoclostridium phytofermentans (strain ATCC 700394 / DSM 18823 / ISDg) (Clostridium phytofermentans)).